The following is a 106-amino-acid chain: Putative double-stranded DNA mimic protein VV1228 (106 aa).

This sequence belongs to the putative dsDNA mimic protein family.

Its function is as follows. May act as a double-stranded DNA (dsDNA) mimic. Probably regulates the activity of a dsDNA-binding protein. This chain is Putative double-stranded DNA mimic protein VV1228, found in Vibrio vulnificus (strain YJ016).